A 413-amino-acid chain; its full sequence is MQIYMVGGAVRDRLLGRPVHDRDWVVVGATPEQMRAQGYLPVGRDFPVFLHPATREEYALARTERKSGRGYRGFVVHSAPEVTLQEDLSRRDLTINAIATSADASGAGCLIDPHHGARDIAARVLRHVSTAFREDPVRILRVARFAARLPDFTVAPETLQLMREMVAHGETDHLVAERVWQELARGLMAEKPSRMFEVLRACGALERLLPEVERLWGVPQSAEHHPEIDTGAHLLLVLDMAARLQAPLAVRFACLAHDLGKGSTPADMLPRHIGHETRGAELLKHLAERLRVPADCRATADKVAREHGHIHCSNALSAAALVRLLERCDALRLPQRFADILLACECDARGRLGFAESAYPQRPRLTAALAAAQSVHSSAIAAQAAARGLAGPQVGALIRQARVAAVAQWLASQ.

The ATP site is built by Gly8 and Arg11. The CTP site is built by Gly8 and Arg11. The Mg(2+) site is built by Asp21 and Asp23. The ATP site is built by Arg91, Arg141, and Arg144. Residues Arg91, Arg141, and Arg144 each coordinate CTP. Residues 230-331 (TGAHLLLVLD…VRLLERCDAL (102 aa)) enclose the HD domain.

Belongs to the tRNA nucleotidyltransferase/poly(A) polymerase family. Bacterial CCA-adding enzyme type 1 subfamily. In terms of assembly, monomer. Can also form homodimers and oligomers. The cofactor is Mg(2+). It depends on Ni(2+) as a cofactor.

It carries out the reaction a tRNA precursor + 2 CTP + ATP = a tRNA with a 3' CCA end + 3 diphosphate. The catalysed reaction is a tRNA with a 3' CCA end + 2 CTP + ATP = a tRNA with a 3' CCACCA end + 3 diphosphate. Functionally, catalyzes the addition and repair of the essential 3'-terminal CCA sequence in tRNAs without using a nucleic acid template. Adds these three nucleotides in the order of C, C, and A to the tRNA nucleotide-73, using CTP and ATP as substrates and producing inorganic pyrophosphate. tRNA 3'-terminal CCA addition is required both for tRNA processing and repair. Also involved in tRNA surveillance by mediating tandem CCA addition to generate a CCACCA at the 3' terminus of unstable tRNAs. While stable tRNAs receive only 3'-terminal CCA, unstable tRNAs are marked with CCACCA and rapidly degraded. In Verminephrobacter eiseniae (strain EF01-2), this protein is Multifunctional CCA protein.